The chain runs to 610 residues: Menin (610 aa).

The segment at glycine 214–proline 390 is interaction with FANCD2. The tract at residues arginine 460 to threonine 552 is disordered. Basic and acidic residues predominate over residues arginine 484 to leucine 500. Residues serine 487 and serine 543 each carry the phosphoserine modification. Threonine 594 carries the post-translational modification Phosphothreonine.

As to quaternary structure, component of the MLL-HCF complex, at least composed of KMT2A/MLL1, MEN1, ASH2L, RBBP5, DPY30, WDR5, HCFC1 and HCFC2. Component of the menin-associated histone methyltransferase complex, at least composed of KMT2B/MLL4, MEN1, ASH2L, RBBP5, DPY30 and WDR5. Interacts with POLR2B. Interacts with POLR2A phosphorylated at 'Ser-5', but not with the unphosphorylated, nor 'Ser-2' phosphorylated POLR2A forms. Interacts with FANCD2 and DBF4. Interacts with JUND (via MBM motif); inhibits the interaction of JUND with MAPK10 and the phosphorylation of JUND by MAP kinases MAPK8 and MAPK10. Interacts with SMAD3, but not with SMAD2, nor SMAD4. Directly interacts with NFKB1, NFKB2 and RELA. Interacts with KMT2A (via MBM motif). The KMT2A-MEN1 complex interacts with PSIP1 with a greater affinity as MEN1 enhances interaction of KMT2A with PSIP1. Interacts with the fusion protein KMT2A-MLLT3. Ubiquitous.

The protein localises to the nucleus. Its function is as follows. Essential component of a MLL/SET1 histone methyltransferase (HMT) complex, a complex that specifically methylates 'Lys-4' of histone H3 (H3K4). Functions as a transcriptional regulator. Binds to the TERT promoter and represses telomerase expression. Plays a role in TGFB1-mediated inhibition of cell-proliferation, possibly regulating SMAD3 transcriptional activity. Represses JUND-mediated transcriptional activation on AP1 sites, as well as that mediated by NFKB subunit RELA. Positively regulates HOXC8 and HOXC6 gene expression. May be involved in normal hematopoiesis through the activation of HOXA9 expression. May be involved in DNA repair. The sequence is that of Menin (MEN1) from Homo sapiens (Human).